The sequence spans 456 residues: MSATQTPTKKLYIKTHGCQMNEYDSNRMRDLLGESHNMVATENPEEADVILINTCSIREKAQEKLFHELGRWKNLKKQNPELIIGVGGCVASQEGAAIAERAPYVDLIFGPQTLHRLPEMMETKKSNGVVVVDISFPEIEKFDKLPQPDADGVSAFVSIMEGCSKYCTFCVVPYTRGEEVSRPVADVMAEVIHLAKQGVREVNLLGQNVNAYRGAAADGTIVDLAELITYIAAVDGIDRIRFTTSHPVEFTDALIEVYNQVPELVSHLHLPVQSGSDRILMAMKRGHTVLEYKSKLRRIKKNRPNISFSSDFIIGFPGETDADFEATMKLIHDMEFDTSFSFIYSPRPGTPAADLPDDTPEEVKKQRLAILQDRITQQAMAISRRMVGNTERILVSGYSKKDPGQLSGRTENNRVVNFRCDNPALIGKFADVLIEEALPNSLRGSLIASELDQDWH.

The 118-residue stretch at 9-126 (KKLYIKTHGC…LPEMMETKKS (118 aa)) folds into the MTTase N-terminal domain. Residues Cys18, Cys55, Cys89, Cys163, Cys167, and Cys170 each coordinate [4Fe-4S] cluster. Residues 149–381 (DADGVSAFVS…QDRITQQAMA (233 aa)) enclose the Radical SAM core domain. One can recognise a TRAM domain in the interval 384–448 (RRMVGNTERI…PNSLRGSLIA (65 aa)).

It belongs to the methylthiotransferase family. MiaB subfamily. As to quaternary structure, monomer. [4Fe-4S] cluster serves as cofactor.

It localises to the cytoplasm. It carries out the reaction N(6)-dimethylallyladenosine(37) in tRNA + (sulfur carrier)-SH + AH2 + 2 S-adenosyl-L-methionine = 2-methylsulfanyl-N(6)-dimethylallyladenosine(37) in tRNA + (sulfur carrier)-H + 5'-deoxyadenosine + L-methionine + A + S-adenosyl-L-homocysteine + 2 H(+). In terms of biological role, catalyzes the methylthiolation of N6-(dimethylallyl)adenosine (i(6)A), leading to the formation of 2-methylthio-N6-(dimethylallyl)adenosine (ms(2)i(6)A) at position 37 in tRNAs that read codons beginning with uridine. This Cellvibrio japonicus (strain Ueda107) (Pseudomonas fluorescens subsp. cellulosa) protein is tRNA-2-methylthio-N(6)-dimethylallyladenosine synthase.